The chain runs to 647 residues: Methyl-accepting chemotaxis protein McpK (647 aa).

Residues 1-16 are Cytoplasmic-facing; it reads MYDWWVLQLAKLSVSR. The helical transmembrane segment at 17–37 threads the bilayer; the sequence is KLMVGFGVLLALLLLVVISSN. Topologically, residues 38–291 are periplasmic; sequence RTLTHQTALS…LRESTASRDR (254 aa). The 243-residue stretch at 45–287 folds into the HBM domain; the sequence is ALSEQLAEVA…AGRQLRESTA (243 aa). A helical transmembrane segment spans residues 292-312; sequence ASLWLIAALALAFGCVAGWAI. The Cytoplasmic segment spans residues 313 to 647; sequence NRQIVRPLDE…LQAQVGRFRL (335 aa). The HAMP domain occupies 314-370; that stretch reads RQIVRPLDEALAQAEAIAAGDLGKRPQNPLTLQRRDELGQLQRVMQRMGDSLRELVG. The Methyl-accepting transducer domain maps to 375–611; sequence GVSQLASSAE…EINRSVLSVR (237 aa).

This sequence belongs to the methyl-accepting chemotaxis (MCP) protein family. In terms of assembly, ligand free ligand-binding domain (LBD) is present in a monomer-dimer equilibrium. AlphaKG binding stabilizes the homodimer.

It localises to the cell inner membrane. Its function is as follows. Chemotactic-signal transducers respond to changes in the concentration of attractants and repellents in the environment, transduce a signal from the outside to the inside of the cell, and facilitate sensory adaptation through the variation of the level of methylation. McpK is a chemoreceptor that specifically binds and mediates chemotaxis to alpha-ketoglutarate (alphaKG). The sequence is that of Methyl-accepting chemotaxis protein McpK from Pseudomonas aeruginosa (strain ATCC 15692 / DSM 22644 / CIP 104116 / JCM 14847 / LMG 12228 / 1C / PRS 101 / PAO1).